We begin with the raw amino-acid sequence, 404 residues long: Cysteine desulfurase IscS (404 aa).

Residues alanine 73 to threonine 74, asparagine 153, glutamine 181, and serine 201 to histidine 203 contribute to the pyridoxal 5'-phosphate site. Residue lysine 204 is modified to N6-(pyridoxal phosphate)lysine. Residue threonine 241 participates in pyridoxal 5'-phosphate binding. The Cysteine persulfide intermediate role is filled by cysteine 327. Cysteine 327 contacts [2Fe-2S] cluster.

Belongs to the class-V pyridoxal-phosphate-dependent aminotransferase family. NifS/IscS subfamily. In terms of assembly, homodimer. Forms a heterotetramer with IscU, interacts with other sulfur acceptors. Pyridoxal 5'-phosphate is required as a cofactor.

The protein resides in the cytoplasm. The catalysed reaction is (sulfur carrier)-H + L-cysteine = (sulfur carrier)-SH + L-alanine. It functions in the pathway cofactor biosynthesis; iron-sulfur cluster biosynthesis. Its function is as follows. Master enzyme that delivers sulfur to a number of partners involved in Fe-S cluster assembly, tRNA modification or cofactor biosynthesis. Catalyzes the removal of elemental sulfur atoms from cysteine to produce alanine. Functions as a sulfur delivery protein for Fe-S cluster synthesis onto IscU, an Fe-S scaffold assembly protein, as well as other S acceptor proteins. This is Cysteine desulfurase IscS from Anaeromyxobacter sp. (strain Fw109-5).